Here is a 429-residue protein sequence, read N- to C-terminus: MIRPRDELGTATTDSAQKIVLLGSGELGKEIAIEAQRLGVEVIAVDRYANAPAMQIAHRSYVGDMRKADFLFSVVEREKPDAIIPEIEAINLDALFELEKDGYFVVPNAKATWIAMHRERTRETLAREAKVPTSRYTYASTLDELYEACEKIGYPCHTKAIMSSSGKGSYFVKGPEDVPKAWEEAKKKARGSAEKLIVEEHIDFDVEITELAVRHYDENGEVVTTFPKPVGHYQIDGDYHSSWQPAEISERAEREVYRIAKRITDVLGGLGIFGVEMFVKGDKVWANEVSPRPHDTGMVTLASHPTGFSEFGLHLRAVLGLPIPGEWVDGYRLFPMLTPAATHVIKANVSGYSPRFRGLAKALSVPNATVRLFGKPEAYPGRRLGVAIAWDKDVGEAKRKAEMVAHSIELRTRSANWHSQDYEKRKHLL.

N(1)-(5-phospho-beta-D-ribosyl)glycinamide contacts are provided by residues 26 to 27 (EL) and glutamate 86. ATP is bound by residues arginine 118, lysine 159, 199 to 202 (EEHI), and glutamate 207. An ATP-grasp domain is found at 123–319 (ETLAREAKVP…EFGLHLRAVL (197 aa)). 2 residues coordinate Mg(2+): glutamate 276 and glutamate 288. N(1)-(5-phospho-beta-D-ribosyl)glycinamide contacts are provided by residues aspartate 295, lysine 375, and 382-383 (RR).

It belongs to the PurK/PurT family. Homodimer.

It catalyses the reaction N(1)-(5-phospho-beta-D-ribosyl)glycinamide + formate + ATP = N(2)-formyl-N(1)-(5-phospho-beta-D-ribosyl)glycinamide + ADP + phosphate + H(+). Its pathway is purine metabolism; IMP biosynthesis via de novo pathway; N(2)-formyl-N(1)-(5-phospho-D-ribosyl)glycinamide from N(1)-(5-phospho-D-ribosyl)glycinamide (formate route): step 1/1. Functionally, involved in the de novo purine biosynthesis. Catalyzes the transfer of formate to 5-phospho-ribosyl-glycinamide (GAR), producing 5-phospho-ribosyl-N-formylglycinamide (FGAR). Formate is provided by PurU via hydrolysis of 10-formyl-tetrahydrofolate. This is Formate-dependent phosphoribosylglycinamide formyltransferase from Thermococcus kodakarensis (strain ATCC BAA-918 / JCM 12380 / KOD1) (Pyrococcus kodakaraensis (strain KOD1)).